The chain runs to 216 residues: 3-isopropylmalate dehydratase small subunit (216 aa).

It belongs to the LeuD family. LeuD type 1 subfamily. In terms of assembly, heterodimer of LeuC and LeuD.

It carries out the reaction (2R,3S)-3-isopropylmalate = (2S)-2-isopropylmalate. Its pathway is amino-acid biosynthesis; L-leucine biosynthesis; L-leucine from 3-methyl-2-oxobutanoate: step 2/4. Functionally, catalyzes the isomerization between 2-isopropylmalate and 3-isopropylmalate, via the formation of 2-isopropylmaleate. The sequence is that of 3-isopropylmalate dehydratase small subunit from Burkholderia mallei (strain NCTC 10247).